The chain runs to 1663 residues: Complement C3 (1663 aa).

An N-terminal signal peptide occupies residues methionine 1–glycine 24. Serine 40 carries the post-translational modification Phosphoserine. 13 disulfide bridges follow: cysteine 559–cysteine 816, cysteine 626–cysteine 661, cysteine 693–cysteine 720, cysteine 694–cysteine 727, cysteine 707–cysteine 728, cysteine 873–cysteine 1513, cysteine 1101–cysteine 1158, cysteine 1358–cysteine 1489, cysteine 1389–cysteine 1458, cysteine 1506–cysteine 1511, cysteine 1518–cysteine 1590, cysteine 1537–cysteine 1661, and cysteine 1637–cysteine 1646. A Phosphoserine modification is found at serine 671. The Anaphylatoxin-like domain occupies cysteine 693–cysteine 728. N-linked (GlcNAc...) asparagine glycosylation is present at asparagine 939. Serine 968 carries the phosphoserine modification. The isoglutamyl cysteine thioester (Cys-Gln) cross-link spans cysteine 1010 to glutamine 1013. Position 1321 is a phosphoserine (serine 1321). An NTR domain is found at cysteine 1518 to cysteine 1661. The residue at position 1573 (serine 1573) is a Phosphoserine. A glycan (N-linked (GlcNAc...) asparagine) is linked at asparagine 1617. The tract at residues alanine 1634 to tyrosine 1659 is interaction with CFP/properdin.

In absence of complement activation, the C3 precursor is first processed by the removal of 4 Arg residues, forming two chains, beta and alpha, linked by a disulfide bond. As to quaternary structure, complement C3b is composed of complement C3b and complement C3 beta chains that are associated via disulfide bonds. Non-enzymatic component of the C5 convertase, also named C4bC2bC3b, composed of the serine protease complement C2b (C2), complement C3b, as well as complement C4b (C4). Non-enzymatic component of the C5 convertase of the alternative complement pathways composed of the serine protease complement CFB and complement C3b. Interacts with CFP; interaction takes place together with CFB in the alternative complement system and allows the complex to become active. Interacts with CR1 (via Sushi 8 and Sushi 9 domains). Interacts with CFH. In terms of assembly, interacts with CFH. Interacts with CR2. During pregnancy, C3dg exists as a complex (probably a 2:2:2 heterohexamer) with AGT and the proform of PRG2. Interacts with CR2 (via the N-terminal Sushi domains 1 and 2). Post-translationally, C3 precursor is first processed by the removal of 4 Arg residues, forming two chains, beta and alpha, linked by a disulfide bond. During activation of the complement systems, the alpha chain is cleaved into C3a and C3b by the C3 convertase: C3b stays linked to the beta chain, while C3a is released in the plasma. The alpha chain is cleaved by the serine protease complement C2b component of the C3 convertase to generate C3a and C3b following activation by the classical, lectin and GZMK complement systems. The alpha chain is cleaved by CFB component of the C3 convertase to generate C3a and C3b following activation by the alternative complement system. In terms of processing, C3a is further processed by carboxypeptidases to release the C-terminal arginine residue generating the acylation stimulating protein (ASP). Levels of ASP are increased in adipocytes in the postprandial period and by insulin and dietary chylomicrons. Complement C3b is rapidly split in two positions by factor I (CFI) and a cofactor (CFH) to form iC3b (inactivated C3b) and C3f which is released. CFI and CFH catalyze proteolytic degradation of already-deposited complement C3b. Then iC3b is slowly cleaved (possibly by CFI) to form C3c (beta chain + alpha' chain fragment 1 + alpha' chain fragment 2), C3dg and C3f. Other proteases produce other fragments such as C3d or C3g. Post-translationally, upon activation, the internal thioester bond reacts with carbohydrate antigens on the target surface to form amide or ester bonds, leading to covalent association with the surface of pathogens. In terms of processing, complement C3b interacts with complement C4b via a thioester linkage. Phosphorylated by FAM20C in the extracellular medium.

Its subcellular location is the secreted. The protein resides in the cell surface. With respect to regulation, complement activation is inhibited by VSIG4. Its function is as follows. Precursor of non-enzymatic components of the classical, alternative, lectin and GZMK complement pathways, which consist in a cascade of proteins that leads to phagocytosis and breakdown of pathogens and signaling that strengthens the adaptive immune system. Functionally, non-enzymatic component of C5 convertase. Generated following cleavage by C3 convertase, it covalently attaches to the surface of pathogens, where it acts as an opsonin that marks the surface of antigens for removal. Complement C3b binds covalently via its reactive thioester, to cell surface carbohydrates or immune aggregates. Together with complement C4b, it then recruits the serine protease complement C2b to form the C5 convertase, which cleaves and activate C5, the next component of the complement pathways. In the alternative complement pathway, recruits the serine protease CFB to form the C5 convertase that cleaves and activates C5. Mediator of local inflammatory process released following cleavage by C3 convertase. Acts by binding to its receptor, C3AR1, activating G protein-coupled receptor signaling, promoting the phosphorylation, ARRB2-mediated internalization and endocytosis of C3AR1. C3a anaphylatoxin stimulates the activation of immune cells such as mast cells and basophilic leukocytes to release inflammation agents, such as cytokines, chemokines and histamine, which promote inflammation development. Also acts as potent chemoattractant for the migration of macrophages and neutrophils to the inflamed tissues, resulting in neutralization of the inflammatory triggers by multiple ways, such as phagocytosis and generation of reactive oxidants. In terms of biological role, adipogenic hormone that stimulates triglyceride synthesis and glucose transport in adipocytes, regulating fat storage and playing a role in postprandial triglyceride clearance. Appears to stimulate triglyceride synthesis via activation of the PLC, MAPK and AKT signaling pathways. Acts by binding to its receptor, C5AR2, activating G protein-coupled receptor signaling, promoting the phosphorylation, ARRB2-mediated internalization and endocytosis of C5AR2. Its function is as follows. Acts as a chemoattractant for neutrophils in chronic inflammation. This is Complement C3 from Mus musculus (Mouse).